Consider the following 322-residue polypeptide: Probable 5-dehydro-4-deoxyglucarate dehydratase 2 (322 aa).

This sequence belongs to the DapA family.

The enzyme catalyses 5-dehydro-4-deoxy-D-glucarate + H(+) = 2,5-dioxopentanoate + CO2 + H2O. Its pathway is carbohydrate acid metabolism; D-glucarate degradation; 2,5-dioxopentanoate from D-glucarate: step 2/2. The protein is Probable 5-dehydro-4-deoxyglucarate dehydratase 2 of Streptomyces coelicolor (strain ATCC BAA-471 / A3(2) / M145).